We begin with the raw amino-acid sequence, 495 residues long: Protein-serine O-palmitoleoyltransferase porcupine (495 aa).

8 consecutive transmembrane segments (helical) span residues 46-66, 92-112, 184-204, 232-252, 358-378, 403-422, 434-454, and 475-495; these read TQYI…VLIV, VIDH…AVQW, TVLS…GPWI, MLIH…FLLT, PFGT…LHGL, LATI…SCTV, VINM…GCIF, and TELN…YFVI. Histidine 376 is a catalytic residue.

The protein belongs to the membrane-bound acyltransferase family. Porcupine subfamily.

It localises to the endoplasmic reticulum membrane. It carries out the reaction [Wnt protein]-L-serine + (9Z)-hexadecenoyl-CoA = [Wnt protein]-O-(9Z)-hexadecenoyl-L-serine + CoA. In terms of biological role, protein-serine O-palmitoleoyltransferase that acts as a key regulator of the Wnt signaling pathway by mediating the attachment of palmitoleate, a 16-carbon monounsaturated fatty acid (C16:1(9Z)), to Wnt proteins. Serine palmitoleoylation of WNT proteins is required for efficient binding to frizzled receptors. This chain is Protein-serine O-palmitoleoyltransferase porcupine, found in Anopheles gambiae (African malaria mosquito).